Consider the following 134-residue polypeptide: Large ribosomal subunit protein uL24 (134 aa).

The protein belongs to the universal ribosomal protein uL24 family. As to quaternary structure, part of the 50S ribosomal subunit.

In terms of biological role, one of two assembly initiator proteins, it binds directly to the 5'-end of the 23S rRNA, where it nucleates assembly of the 50S subunit. Functionally, located at the polypeptide exit tunnel on the outside of the subunit. This chain is Large ribosomal subunit protein uL24, found in Sulfolobus acidocaldarius (strain ATCC 33909 / DSM 639 / JCM 8929 / NBRC 15157 / NCIMB 11770).